Reading from the N-terminus, the 356-residue chain is Inositol phosphoceramide mannosyltransferase 3 (356 aa).

The helical transmembrane segment at 4–24 threads the bilayer; that stretch reads ILFYFFFFLTLILSATVYLFG. 2 N-linked (GlcNAc...) asparagine glycosylation sites follow: Asn52 and Asn146. 2 helical membrane-spanning segments follow: residues 197–217 and 269–289; these read FPYLTVMYSTGPLFLSIIWSA and WAIFTFLGFLTFFIVVYFIFG. Phosphoserine is present on residues Ser307, Ser353, and Ser355.

The protein belongs to the glycosyltransferase 32 family.

It localises to the endoplasmic reticulum membrane. It is found in the golgi apparatus. The protein resides in the cis-Golgi network membrane. Its subcellular location is the trans-Golgi network membrane. With imt1 and imt2, is required for the synthesis of mannosylinositol phosphoceramide (MIPC). Catalyzes the addition of mannosyl to inositol phosphoceramide (IPC). MIPC is essential for cell morphology, cell-surface distribution of ergosterol, localization for plasma-membrane transporters, and lipid-raft-mediated endocytosis of plasma membrane proteins to the vacuole. In Schizosaccharomyces pombe (strain 972 / ATCC 24843) (Fission yeast), this protein is Inositol phosphoceramide mannosyltransferase 3.